Here is a 283-residue protein sequence, read N- to C-terminus: Pantothenate synthetase (283 aa).

Residue 34-41 participates in ATP binding; it reads MGALHDGH. The active-site Proton donor is the His41. A (R)-pantoate-binding site is contributed by Gln65. Gln65 is a beta-alanine binding site. 152–155 is a binding site for ATP; it reads GSKD. Gln158 lines the (R)-pantoate pocket. ATP is bound by residues Ile181 and 189-192; that span reads MSSR.

It belongs to the pantothenate synthetase family. As to quaternary structure, homodimer.

Its subcellular location is the cytoplasm. The catalysed reaction is (R)-pantoate + beta-alanine + ATP = (R)-pantothenate + AMP + diphosphate + H(+). It functions in the pathway cofactor biosynthesis; (R)-pantothenate biosynthesis; (R)-pantothenate from (R)-pantoate and beta-alanine: step 1/1. Catalyzes the condensation of pantoate with beta-alanine in an ATP-dependent reaction via a pantoyl-adenylate intermediate. In Rhodopseudomonas palustris (strain HaA2), this protein is Pantothenate synthetase.